The following is a 407-amino-acid chain: Aspartate aminotransferase, cytoplasmic (407 aa).

L-aspartate contacts are provided by Gly-39, Trp-136, and Asn-189. Lys-253 is modified (N6-(pyridoxal phosphate)lysine). Residue Arg-381 coordinates L-aspartate.

Belongs to the class-I pyridoxal-phosphate-dependent aminotransferase family. Homodimer. Pyridoxal 5'-phosphate serves as cofactor.

The protein resides in the cytoplasm. The enzyme catalyses L-aspartate + 2-oxoglutarate = oxaloacetate + L-glutamate. Functionally, important for the metabolism of amino acids and Krebs-cycle related organic acids. In plants, it is involved in nitrogen metabolism and in aspects of carbon and energy metabolism. This Oryza sativa subsp. japonica (Rice) protein is Aspartate aminotransferase, cytoplasmic.